The chain runs to 169 residues: 6,7-dimethyl-8-ribityllumazine synthase (169 aa).

Residues Phe-24, 58–60, and 82–84 contribute to the 5-amino-6-(D-ribitylamino)uracil site; these read ALE and AVI. 87 to 88 lines the (2S)-2-hydroxy-3-oxobutyl phosphate pocket; the sequence is ET. His-90 serves as the catalytic Proton donor. Residue Asn-115 participates in 5-amino-6-(D-ribitylamino)uracil binding. Position 129 (Arg-129) interacts with (2S)-2-hydroxy-3-oxobutyl phosphate.

It belongs to the DMRL synthase family.

The catalysed reaction is (2S)-2-hydroxy-3-oxobutyl phosphate + 5-amino-6-(D-ribitylamino)uracil = 6,7-dimethyl-8-(1-D-ribityl)lumazine + phosphate + 2 H2O + H(+). The protein operates within cofactor biosynthesis; riboflavin biosynthesis; riboflavin from 2-hydroxy-3-oxobutyl phosphate and 5-amino-6-(D-ribitylamino)uracil: step 1/2. Catalyzes the formation of 6,7-dimethyl-8-ribityllumazine by condensation of 5-amino-6-(D-ribitylamino)uracil with 3,4-dihydroxy-2-butanone 4-phosphate. This is the penultimate step in the biosynthesis of riboflavin. This chain is 6,7-dimethyl-8-ribityllumazine synthase, found in Burkholderia vietnamiensis (strain G4 / LMG 22486) (Burkholderia cepacia (strain R1808)).